Consider the following 237-residue polypeptide: Uridylate kinase (237 aa).

11–14 (KLSG) lines the ATP pocket. Gly-52 is a binding site for UMP. 2 residues coordinate ATP: Gly-53 and Arg-57. Residues Asp-72 and 134-141 (TGYSYFTT) each bind UMP. Asn-162, Tyr-168, and Asp-171 together coordinate ATP.

It belongs to the UMP kinase family. As to quaternary structure, homohexamer.

It localises to the cytoplasm. It catalyses the reaction UMP + ATP = UDP + ADP. The protein operates within pyrimidine metabolism; CTP biosynthesis via de novo pathway; UDP from UMP (UMPK route): step 1/1. Inhibited by UTP. Functionally, catalyzes the reversible phosphorylation of UMP to UDP. This is Uridylate kinase from Mycoplasma capricolum subsp. capricolum (strain California kid / ATCC 27343 / NCTC 10154).